The following is a 152-amino-acid chain: uncharacterized protein (152 aa).

Positions 7–133 (PALSPHLVVD…FGHHWSLGQP (127 aa)) constitute a VOC domain.

This is an uncharacterized protein from Mycobacterium bovis (strain ATCC BAA-935 / AF2122/97).